Here is a 214-residue protein sequence, read N- to C-terminus: Probable maleylacetoacetate isomerase (214 aa).

Residues 4 to 84 (QKPVLYSYWR…YLEETHPDVP (81 aa)) enclose the GST N-terminal domain. Residues 14-19 (SSCSWR), Val56, 68-69 (ES), Gln108, and 112-114 (NLK) each bind glutathione. The GST C-terminal domain maps to 89–212 (DPIKRAHARA…HPDNQPDTGL (124 aa)).

This sequence belongs to the GST superfamily. Zeta family. Glutathione is required as a cofactor.

Its subcellular location is the cytoplasm. It catalyses the reaction 4-maleylacetoacetate = 4-fumarylacetoacetate. It participates in amino-acid degradation; L-phenylalanine degradation; acetoacetate and fumarate from L-phenylalanine: step 5/6. This chain is Probable maleylacetoacetate isomerase (gst-42), found in Caenorhabditis elegans.